The chain runs to 434 residues: ATP-dependent RNA helicase RhlB (434 aa).

Positions 9 to 37 (KKFADFPLKPEILAALNENGFEFCTPIQA) match the Q motif motif. A Helicase ATP-binding domain is found at 40–219 (LPILLNAKDI…YDHMNDPEKV (180 aa)). 53 to 60 (AQTGTGKT) is a binding site for ATP. A DEAD box motif is present at residues 165-168 (DEAD). One can recognise a Helicase C-terminal domain in the interval 243–390 (KMRLLLSLIE…VSNYDKDALL (148 aa)). The tract at residues 390-434 (LDDIPPPARIHRKPPTSRTRDGGSKGAHRSGGNTSRPPRHRTRRP) is disordered.

The protein belongs to the DEAD box helicase family. RhlB subfamily. As to quaternary structure, component of the RNA degradosome, which is a multiprotein complex involved in RNA processing and mRNA degradation.

Its subcellular location is the cytoplasm. The catalysed reaction is ATP + H2O = ADP + phosphate + H(+). In terms of biological role, DEAD-box RNA helicase involved in RNA degradation. Has RNA-dependent ATPase activity and unwinds double-stranded RNA. The sequence is that of ATP-dependent RNA helicase RhlB from Shewanella frigidimarina (strain NCIMB 400).